We begin with the raw amino-acid sequence, 510 residues long: 2,3-bisphosphoglycerate-independent phosphoglycerate mutase (510 aa).

Mn(2+)-binding residues include aspartate 13 and serine 63. The active-site Phosphoserine intermediate is the serine 63. Residues histidine 124, 154–155 (RD), arginine 186, arginine 192, 262–265 (RADR), and lysine 334 contribute to the substrate site. Aspartate 401, histidine 405, aspartate 442, histidine 443, and histidine 461 together coordinate Mn(2+).

Belongs to the BPG-independent phosphoglycerate mutase family. In terms of assembly, monomer. The cofactor is Mn(2+).

It carries out the reaction (2R)-2-phosphoglycerate = (2R)-3-phosphoglycerate. The protein operates within carbohydrate degradation; glycolysis; pyruvate from D-glyceraldehyde 3-phosphate: step 3/5. In terms of biological role, catalyzes the interconversion of 2-phosphoglycerate and 3-phosphoglycerate. The polypeptide is 2,3-bisphosphoglycerate-independent phosphoglycerate mutase (Vibrio atlanticus (strain LGP32) (Vibrio splendidus (strain Mel32))).